We begin with the raw amino-acid sequence, 382 residues long: Lipid-A-disaccharide synthase (382 aa).

This sequence belongs to the LpxB family.

It carries out the reaction 2-N,3-O-bis[(3R)-3-hydroxytetradecanoyl]-alpha-D-glucosaminyl 1-phosphate + UDP-2-N,3-O-bis[(3R)-3-hydroxytetradecanoyl]-alpha-D-glucosamine = lipid A disaccharide (E. coli) + UDP + H(+). The enzyme catalyses a lipid X + a UDP-2-N,3-O-bis[(3R)-3-hydroxyacyl]-alpha-D-glucosamine = a lipid A disaccharide + UDP + H(+). It participates in glycolipid biosynthesis; lipid IV(A) biosynthesis; lipid IV(A) from (3R)-3-hydroxytetradecanoyl-[acyl-carrier-protein] and UDP-N-acetyl-alpha-D-glucosamine: step 5/6. Functionally, condensation of UDP-2,3-diacylglucosamine and 2,3-diacylglucosamine-1-phosphate to form lipid A disaccharide, a precursor of lipid A, a phosphorylated glycolipid that anchors the lipopolysaccharide to the outer membrane of the cell. The chain is Lipid-A-disaccharide synthase from Salmonella paratyphi A (strain AKU_12601).